Reading from the N-terminus, the 379-residue chain is Chaperone protein DnaJ (379 aa).

The 65-residue stretch at 5–69 (EYYERLGVDK…QKRAAYDQYG (65 aa)) folds into the J domain. The segment at 141 to 223 (GVEKQVKYNR…CHGSGHEKVA (83 aa)) adopts a CR-type zinc-finger fold. Cys154, Cys157, Cys171, Cys174, Cys197, Cys200, and Cys214 together coordinate Zn(2+). 4 CXXCXGXG motif repeats span residues 154–161 (CHTCGGSG), 171–178 (CHKCGGRG), 197–204 (CDVCHGTG), and 211–218 (STTCHGSG).

This sequence belongs to the DnaJ family. Homodimer. The cofactor is Zn(2+).

Its subcellular location is the cytoplasm. Its function is as follows. Participates actively in the response to hyperosmotic and heat shock by preventing the aggregation of stress-denatured proteins and by disaggregating proteins, also in an autonomous, DnaK-independent fashion. Unfolded proteins bind initially to DnaJ; upon interaction with the DnaJ-bound protein, DnaK hydrolyzes its bound ATP, resulting in the formation of a stable complex. GrpE releases ADP from DnaK; ATP binding to DnaK triggers the release of the substrate protein, thus completing the reaction cycle. Several rounds of ATP-dependent interactions between DnaJ, DnaK and GrpE are required for fully efficient folding. Also involved, together with DnaK and GrpE, in the DNA replication of plasmids through activation of initiation proteins. The sequence is that of Chaperone protein DnaJ from Lactococcus lactis subsp. cremoris (Streptococcus cremoris).